The chain runs to 85 residues: Protein C4 (85 aa).

Gly2 is lipidated: N-myristoyl glycine; by host. Residues Leu42–Arg65 form a disordered region. Residues Pro44–Ser59 show a composition bias toward low complexity.

This sequence belongs to the geminiviridae protein AC4/C4 family.

Its subcellular location is the host cell membrane. In terms of biological role, pathogenicity determinant. May act as a suppressor of RNA-mediated gene silencing, also known as post-transcriptional gene silencing (PTGS), a mechanism of plant viral defense that limits the accumulation of viral RNAs. In Solanum lycopersicum (Tomato), this protein is Protein C4.